A 377-amino-acid polypeptide reads, in one-letter code: MLKRASFVEVNTHSLRHNFNAVKNIVPKDACVMAVVKANAYGAGAIKASEIFLQEGANYLGVATLDEALELRSHFSQTPILILGYSPNTNASMLIDNDLSAMVFSLEQAEVFSQMALKSQKRLKVHLKIDTGMHRLGLEPTFKSIETIKKIRALKGLEVEGIFTHLSNADSNIKTHAKNQMKVFNAFLEQLLDQKIEFQYRHAYNSAGILSLCNGNENRLLNLYRPGIMLYGFYPSNEMKESSQTILKNVISLKARIVQIKRVKKGEFIGYGEHFYTNEETLVGVLALGYADGLVRALGNRIQVAINNQLAPLIGKVCMDQCFVKLNDIEAKEGDEVILFGDKSTKANDASEIATLLNTIPYETISTLSKRLERVYV.

Residue lysine 37 is the Proton acceptor; specific for D-alanine of the active site. Position 37 is an N6-(pyridoxal phosphate)lysine (lysine 37). Arginine 135 serves as a coordination point for substrate. Tyrosine 271 acts as the Proton acceptor; specific for L-alanine in catalysis. Methionine 319 contributes to the substrate binding site.

The protein belongs to the alanine racemase family. It depends on pyridoxal 5'-phosphate as a cofactor.

It carries out the reaction L-alanine = D-alanine. It participates in amino-acid biosynthesis; D-alanine biosynthesis; D-alanine from L-alanine: step 1/1. Its function is as follows. Catalyzes the interconversion of L-alanine and D-alanine. May also act on other amino acids. In Helicobacter pylori (strain J99 / ATCC 700824) (Campylobacter pylori J99), this protein is Alanine racemase (alr).